Consider the following 208-residue polypeptide: V-type ATP synthase subunit D (208 aa).

Belongs to the V-ATPase D subunit family.

Produces ATP from ADP in the presence of a proton gradient across the membrane. The sequence is that of V-type ATP synthase subunit D from Streptococcus pyogenes serotype M6 (strain ATCC BAA-946 / MGAS10394).